A 150-amino-acid polypeptide reads, in one-letter code: Anti-sigma F factor (150 aa).

Belongs to the anti-sigma-factor family.

It catalyses the reaction L-seryl-[protein] + ATP = O-phospho-L-seryl-[protein] + ADP + H(+). The enzyme catalyses L-threonyl-[protein] + ATP = O-phospho-L-threonyl-[protein] + ADP + H(+). Its function is as follows. Binds to sigma F and blocks its ability to form an RNA polymerase holoenzyme (E-sigma F). Phosphorylates SpoIIAA on a serine residue. This phosphorylation may enable SpoIIAA to act as an anti-anti-sigma factor that counteracts SpoIIAB and thus releases sigma F from inhibition. The protein is Anti-sigma F factor of Pasteuria penetrans.